Reading from the N-terminus, the 1274-residue chain is MLLLQCRNPTSPPKPCGLVPNVKMSLLVFLGLLGVSAAMPFQMPMPRMPGFSSKSEEMMRYNQFNFMNAPPMMPMGPYGNGMPMPPHMPPQYPPYQMPMWPPPVPNGWQQPPMPNFPSKTDQTQETAKPNQTNPQEPQPQKQPLKEPPNEAARAKDDAQPPQPFPPFGNGLYPYPQPPWPIPQRGPPTAFGRPKFSNEEGNPYYAFFGYHGFGGRPYYSEEMFEDYEKPKEKDPPKPEDPPPDDPPPEASTNSTVPDANATQSIPEGGNDTSPIGNTGPGPNAGNNPTVQNGVFPPPKVNVSGQGVPKSQIPWRPSQPNIYENYPYPNYPSERQWQTTGTQGPRQNGPGYRNPQVERGPQWNSFAWEGKQATRPGNPTYGKPPSPTSGVNYAGNPVHFGRNLPGPNKPFVGANPASNKPFVGANPASNKPFVGANPASNKPFVGANPASNKPFVGANPASNKPYVGANPASNKPFIGANPAANKPSIGTNPAANKPSIGTNPAANKPFVRNNVGANKPFVGTNPSSNQPFLRSNQASNKPFMRSNQASNKPFVGTNVASVGPKQVTVSHNMKTQNPKEKSLGQKERTVTPTKDASNPWRSAKQYGINNPNYNLPRSEGSMVGPNFNSFDQQENSYFSKGASKRVPSPNIQIQSQNLPKGIALEPRRTPFQSETKKPELKHGTHQPAYPKKIPSPTRKHFPAERNTWNRQKILPPLKEDYGRQDENLRHPSYGSRGNIFYHEYTNPYHNEKSQYIKSNPWDKSSPSTMMRPENPQYTMTSLDQKETEQYNEEDPIDPNEDESFPGQSRWGDEEMNFKGNPTVRQYEGEHYASTLAKEYLPYSLSNPPKPSEDFPYSEFYPWNPQETFPIYNPGPTIAPPVDPRSYYVNNAIGQEESTLFPSWTSWDHRNQAERQKESEPYFNRNVWDQSINLHKSNIPNHPYSTTSPARFPKDPTWFEGENLNYDLQITSLSPPEREQLAFPDFLPQSYPTGQNEAHLFHQSQRGSCCIGGSTGHKDNVLALQDYTSSYGLPPRKNQETSPVHTESSYIKYARPNVSPASILPSQRNISENKLTAESPNPSPFGDGVPTVRKNTPYSGKNQLETGIVAFSEASSSQPKNTPCLKSDLGGDRRDVLKQFFEGSQLSERTAGLTPEQLVIGIPDKGSGPDSIQSEVQGKEGEMQQQRPPTIMKLPCFGSNSKFHSSTTGPPINNRRPTLLNGALSTPTESPNTLVGLATREQLKSINVDKLNADEHTTLESFQGTSPQDQGCLLLQA.

Residues 1 to 38 form the signal peptide; sequence MLLLQCRNPTSPPKPCGLVPNVKMSLLVFLGLLGVSAA. Positions 103-115 are enriched in pro residues; sequence PVPNGWQQPPMPN. Disordered regions lie at residues 103 to 413, 476 to 610, 668 to 700, 712 to 734, and 753 to 814; these read PVPN…VGAN, IGAN…NNPN, PFQS…KHFP, LPPL…YGSR, and YIKS…EEMN. Positions 117-127 are enriched in polar residues; sequence PSKTDQTQETA. Residues 128-142 are compositionally biased toward low complexity; sequence KPNQTNPQEPQPQKQ. N-linked (GlcNAc...) asparagine glycosylation occurs at asparagine 130. Over residues 143 to 158 the composition is skewed to basic and acidic residues; the sequence is PLKEPPNEAARAKDDA. A compositionally biased stretch (pro residues) spans 174–185; that stretch reads YPQPPWPIPQRG. A phosphoserine mark is found at serine 196 and serine 219. Over residues 225–239 the composition is skewed to basic and acidic residues; sequence DYEKPKEKDPPKPED. The span at 249–272 shows a compositional bias: polar residues; the sequence is ASTNSTVPDANATQSIPEGGNDTS. 3 N-linked (GlcNAc...) asparagine glycosylation sites follow: asparagine 252, asparagine 259, and asparagine 269. The segment covering 273–287 has biased composition (low complexity); the sequence is PIGNTGPGPNAGNNP. N-linked (GlcNAc...) asparagine glycosylation occurs at asparagine 300. Residues 318–330 are compositionally biased toward low complexity; the sequence is PNIYENYPYPNYP. Polar residues-rich tracts occupy residues 331 to 344, 486 to 503, 522 to 549, and 565 to 574; these read SERQ…QGPR, SIGT…TNPA, TNPS…QASN, and VTVSHNMKTQ. A compositionally biased stretch (basic and acidic residues) spans 575-587; that stretch reads NPKEKSLGQKERT. The span at 588–598 shows a compositional bias: polar residues; the sequence is VTPTKDASNPW. Positions 715–727 are enriched in basic and acidic residues; it reads LKEDYGRQDENLR. Polar residues predominate over residues 753-766; that stretch reads YIKSNPWDKSSPST. Positions 787-801 are enriched in acidic residues; that stretch reads QYNEEDPIDPNEDES. Asparagine 1066 is a glycosylation site (N-linked (GlcNAc...) asparagine). Disordered stretches follow at residues 1071-1097 and 1109-1128; these read KLTA…PYSG and SEAS…DLGG.

Post-translationally, phosphorylated by FAM20C in vitro. As to expression, expressed in developing teeth.

The protein resides in the secreted. Its subcellular location is the extracellular space. The protein localises to the extracellular matrix. Functionally, involved in the mineralization and structural organization of enamel. Involved in the extension of enamel during the secretory stage of dental enamel formation. This chain is Enamelin (Enam), found in Mus musculus (Mouse).